The following is a 166-amino-acid chain: Large ribosomal subunit protein uL10 (166 aa).

The protein belongs to the universal ribosomal protein uL10 family. In terms of assembly, part of the ribosomal stalk of the 50S ribosomal subunit. The N-terminus interacts with L11 and the large rRNA to form the base of the stalk. The C-terminus forms an elongated spine to which L12 dimers bind in a sequential fashion forming a multimeric L10(L12)X complex.

In terms of biological role, forms part of the ribosomal stalk, playing a central role in the interaction of the ribosome with GTP-bound translation factors. The chain is Large ribosomal subunit protein uL10 from Pseudomonas entomophila (strain L48).